Here is a 429-residue protein sequence, read N- to C-terminus: UDP-N-acetylglucosamine 1-carboxyvinyltransferase (429 aa).

22 to 23 lines the phosphoenolpyruvate pocket; sequence KN. Residue R102 participates in UDP-N-acetyl-alpha-D-glucosamine binding. The active-site Proton donor is the C126. 2-(S-cysteinyl)pyruvic acid O-phosphothioketal is present on C126. UDP-N-acetyl-alpha-D-glucosamine is bound by residues 131–135, D316, and I338; that span reads RPVDL.

The protein belongs to the EPSP synthase family. MurA subfamily.

It is found in the cytoplasm. The enzyme catalyses phosphoenolpyruvate + UDP-N-acetyl-alpha-D-glucosamine = UDP-N-acetyl-3-O-(1-carboxyvinyl)-alpha-D-glucosamine + phosphate. Its pathway is cell wall biogenesis; peptidoglycan biosynthesis. Cell wall formation. Adds enolpyruvyl to UDP-N-acetylglucosamine. The chain is UDP-N-acetylglucosamine 1-carboxyvinyltransferase from Rhodopseudomonas palustris (strain BisA53).